The following is a 264-amino-acid chain: Glutamate racemase (264 aa).

Substrate contacts are provided by residues 10–11 (DS) and 42–43 (YG). The Proton donor/acceptor role is filled by cysteine 73. 74 to 75 (NT) is a substrate binding site. The Proton donor/acceptor role is filled by cysteine 183. Residue 184–185 (TH) coordinates substrate.

This sequence belongs to the aspartate/glutamate racemases family.

It carries out the reaction L-glutamate = D-glutamate. The protein operates within cell wall biogenesis; peptidoglycan biosynthesis. Its function is as follows. Provides the (R)-glutamate required for cell wall biosynthesis. The chain is Glutamate racemase from Streptococcus equi subsp. zooepidemicus (strain H70).